The primary structure comprises 64 residues: Large ribosomal subunit protein bL35c (64 aa).

It belongs to the bacterial ribosomal protein bL35 family.

It localises to the plastid. Its subcellular location is the chloroplast. This Trieres chinensis (Marine centric diatom) protein is Large ribosomal subunit protein bL35c.